A 75-amino-acid chain; its full sequence is Putative sulfur carrier protein MJ0990 (75 aa).

The active-site Cysteine persulfide intermediate is the Cys-15.

This sequence belongs to the sulfur carrier protein TusA family.

The chain is Putative sulfur carrier protein MJ0990 from Methanocaldococcus jannaschii (strain ATCC 43067 / DSM 2661 / JAL-1 / JCM 10045 / NBRC 100440) (Methanococcus jannaschii).